The following is a 115-amino-acid chain: MMSAKDMVKVMIVMLAICFLARSDGKSVKKRAVSEIQFMHNLGKHLSSMERVEWLRKKLQDVHNFVALGASIAYRDGSSQRPRKKEDNVLVESHQKSLGEADKADVDVLIKAKPQ.

A signal peptide spans 1-25 (MMSAKDMVKVMIVMLAICFLARSDG). A propeptide spanning residues 26–31 (KSVKKR) is cleaved from the precursor. Residues 51–69 (RVEWLRKKLQDVHNFVALG) are important for receptor binding. The segment at 77 to 99 (GSSQRPRKKEDNVLVESHQKSLG) is disordered. The segment covering 84 to 99 (KKEDNVLVESHQKSLG) has biased composition (basic and acidic residues).

Belongs to the parathyroid hormone family. As to quaternary structure, interacts with PTH1R (via N-terminal extracellular domain).

It localises to the secreted. Its function is as follows. Parathyroid hormone elevates calcium level by dissolving the salts in bone and preventing their renal excretion. Acts by binding to its receptor, PTH1R, activating G protein-coupled receptor signaling. Stimulates [1-14C]-2-deoxy-D-glucose (2DG) transport and glycogen synthesis in osteoblastic cells. This chain is Parathyroid hormone, found in Bos taurus (Bovine).